A 185-amino-acid chain; its full sequence is Meiotically up-regulated gene 5 protein (185 aa).

The protein localises to the cytoplasm. Its function is as follows. Required for correct meiotic chromosome segregation. The sequence is that of Meiotically up-regulated gene 5 protein (mug5) from Schizosaccharomyces pombe (strain 972 / ATCC 24843) (Fission yeast).